Reading from the N-terminus, the 316-residue chain is Mitochondrial GTPase 1 (316 aa).

The CP-type G domain occupies methionine 28–proline 203. GTP-binding positions include asparagine 73–aspartate 76, asparagine 147–serine 152, and glycine 199.

Belongs to the TRAFAC class YlqF/YawG GTPase family. MTG1 subfamily.

The protein localises to the mitochondrion inner membrane. In terms of biological role, plays a role in the regulation of the mitochondrial ribosome assembly and of translational activity. Displays mitochondrial GTPase activity. This Aedes aegypti (Yellowfever mosquito) protein is Mitochondrial GTPase 1.